A 353-amino-acid chain; its full sequence is Photosystem II D2 protein (353 aa).

At Thr2 the chain carries N-acetylthreonine. Phosphothreonine is present on Thr2. A helical transmembrane segment spans residues Cys41–Thr61. A chlorophyll a-binding site is contributed by His118. A helical transmembrane segment spans residues Gly125–Pro141. Pheophytin a is bound by residues Gln130 and Asn143. The chain crosses the membrane as a helical span at residues Val153–Ser166. Residue His198 coordinates chlorophyll a. A helical transmembrane segment spans residues Ala208 to Asp228. 2 residues coordinate a plastoquinone: His215 and Phe262. His215 is a Fe cation binding site. His269 contributes to the Fe cation binding site. A helical membrane pass occupies residues Gly279–Arg295.

Belongs to the reaction center PufL/M/PsbA/D family. In terms of assembly, PSII is composed of 1 copy each of membrane proteins PsbA, PsbB, PsbC, PsbD, PsbE, PsbF, PsbH, PsbI, PsbJ, PsbK, PsbL, PsbM, PsbT, PsbX, PsbY, PsbZ, Psb30/Ycf12, at least 3 peripheral proteins of the oxygen-evolving complex and a large number of cofactors. It forms dimeric complexes. The cofactor is The D1/D2 heterodimer binds P680, chlorophylls that are the primary electron donor of PSII, and subsequent electron acceptors. It shares a non-heme iron and each subunit binds pheophytin, quinone, additional chlorophylls, carotenoids and lipids. There is also a Cl(-1) ion associated with D1 and D2, which is required for oxygen evolution. The PSII complex binds additional chlorophylls, carotenoids and specific lipids..

The protein localises to the plastid. It localises to the chloroplast thylakoid membrane. The enzyme catalyses 2 a plastoquinone + 4 hnu + 2 H2O = 2 a plastoquinol + O2. Photosystem II (PSII) is a light-driven water:plastoquinone oxidoreductase that uses light energy to abstract electrons from H(2)O, generating O(2) and a proton gradient subsequently used for ATP formation. It consists of a core antenna complex that captures photons, and an electron transfer chain that converts photonic excitation into a charge separation. The D1/D2 (PsbA/PsbD) reaction center heterodimer binds P680, the primary electron donor of PSII as well as several subsequent electron acceptors. D2 is needed for assembly of a stable PSII complex. This is Photosystem II D2 protein from Cucumis sativus (Cucumber).